Here is a 532-residue protein sequence, read N- to C-terminus: IQ domain-containing protein IQM4 (532 aa).

Disordered stretches follow at residues 47–67 (SRTNSFKSENPQEKSPKTGME) and 85–104 (PMNKEDEEIVEPTKPARNSL). The span at 56-66 (NPQEKSPKTGM) shows a compositional bias: basic and acidic residues. Over residues 85–94 (PMNKEDEEIV) the composition is skewed to acidic residues. The 30-residue stretch at 136–165 (LDAAATTLQKVYKSYRTRRNLADCAVVVEE) folds into the IQ domain. Disordered stretches follow at residues 410–443 (SSGYEEEATKEEEAEKKPAETIVTEEQEEEKERE) and 487–513 (PRISPGSTRFPSPYGPIPSPRPSPRVR). Over residues 487 to 496 (PRISPGSTRF) the composition is skewed to polar residues. A compositionally biased stretch (pro residues) spans 499-509 (PYGPIPSPRPS).

In terms of tissue distribution, expressed in roots, cauline leaves and flowers, and at lower levels in rosette leaves, stems and siliques.

The protein localises to the cytoplasm. It is found in the nucleus. Its function is as follows. May be involved in biotic and abiotic stress responses. The polypeptide is IQ domain-containing protein IQM4 (Arabidopsis thaliana (Mouse-ear cress)).